Reading from the N-terminus, the 370-residue chain is 2-oxoisovalerate dehydrogenase subunit beta, mitochondrial (370 aa).

Residues 1-25 constitute a mitochondrion transit peptide; that stretch reads MLRGNNIKKVNSLLVRSFHSTVGNR. Thiamine diphosphate is bound at residue Tyr130. The K(+) site is built by Gly156, Leu158, Thr159, and Glu209.

Heterotetramer of 2 alpha and 2 beta chains. It depends on thiamine diphosphate as a cofactor.

The protein localises to the mitochondrion matrix. The enzyme catalyses N(6)-[(R)-lipoyl]-L-lysyl-[protein] + 3-methyl-2-oxobutanoate + H(+) = N(6)-[(R)-S(8)-2-methylpropanoyldihydrolipoyl]-L-lysyl-[protein] + CO2. The branched-chain alpha-keto dehydrogenase complex catalyzes the overall conversion of alpha-keto acids to acyl-CoA and CO(2). It contains multiple copies of three enzymatic components: branched-chain alpha-keto acid decarboxylase (E1), lipoamide acyltransferase (E2) and lipoamide dehydrogenase (E3). The sequence is that of 2-oxoisovalerate dehydrogenase subunit beta, mitochondrial (bkdB) from Dictyostelium discoideum (Social amoeba).